A 233-amino-acid chain; its full sequence is Lysine exporter LysE (233 aa).

The Cytoplasmic portion of the chain corresponds to 1–2 (ME). A helical transmembrane segment spans residues 3 to 23 (IFITGLLLGASLLLSIGPQNV). At 24-65 (LVIKQGIKREGLIAVLLVCLISDVFLFIAGTLGVDLLSNAAP) the chain is on the periplasmic side. Residues 66–86 (IVLDIMRWGGIAYLLWFAVMA) form a helical membrane-spanning segment. Topologically, residues 87-143 (AKDAMTNKVEAPQIIEETEPTVPDDTPLGGSAVATDTRNRVRVEVSVDKQRVWVKPM) are cytoplasmic. The helical transmembrane segment at 144 to 164 (LMAIVLTWLNPNAYLDAFVFI) threads the bilayer. Over 165-176 (GGVGAQYGDTGR) the chain is Periplasmic. The chain crosses the membrane as a helical span at residues 177–197 (WIFAAGAFAASLIWFPLVGFG). Residues 198-212 (AAALSRPLSSPKVWR) are Cytoplasmic-facing. A helical transmembrane segment spans residues 213–233 (WINVVVAVVMTALAIKLMLMG).

The protein belongs to the LysE/ArgO transporter (TC 2.A.75) family.

The protein resides in the cell inner membrane. Transport process is modulated by three forces: the membrane potential, the chemical potential of lysine, and the proton gradient. Strongly inhibited by CCCP and valinomycin. Its function is as follows. Catalyzes the efflux of L-lysine. Can also export L-arginine and L-citrulline. The lysEG system prevents bacteriostasis due to elevated L-lysine or L-arginine concentrations that arise during growth in the presence of peptides or in mutants possessing a deregulated biosynthesis pathway. In vitro, can also export D-lysine during biotechnological production of D-amino acids. The sequence is that of Lysine exporter LysE from Corynebacterium glutamicum (strain ATCC 13032 / DSM 20300 / JCM 1318 / BCRC 11384 / CCUG 27702 / LMG 3730 / NBRC 12168 / NCIMB 10025 / NRRL B-2784 / 534).